Consider the following 74-residue polypeptide: RNA-binding protein Hfq (74 aa).

The 61-residue stretch at 9–69 (DQFLNQLRKE…ISTFAPQKNV (61 aa)) folds into the Sm domain.

Belongs to the Hfq family. In terms of assembly, homohexamer.

RNA chaperone that binds small regulatory RNA (sRNAs) and mRNAs to facilitate mRNA translational regulation in response to envelope stress, environmental stress and changes in metabolite concentrations. Also binds with high specificity to tRNAs. This chain is RNA-binding protein Hfq, found in Anoxybacillus flavithermus (strain DSM 21510 / WK1).